A 404-amino-acid polypeptide reads, in one-letter code: N-acetylglucosamine-6-phosphate deacetylase (404 aa).

Glutamate 143 contacts a divalent metal cation. 154 to 155 (AH) contributes to the substrate binding site. Histidine 211 and histidine 232 together coordinate a divalent metal cation. Residues 235–236 (NA), arginine 243, and 269–272 (DGIH) each bind substrate. The Proton donor/acceptor role is filled by aspartate 294. 328–330 (LSG) lines the substrate pocket.

It belongs to the metallo-dependent hydrolases superfamily. NagA family. The cofactor is a divalent metal cation.

It catalyses the reaction N-acetyl-D-glucosamine 6-phosphate + H2O = D-glucosamine 6-phosphate + acetate. Its pathway is amino-sugar metabolism; N-acetylneuraminate degradation. Functionally, hydrolyzes the N-glycolyl group from N-glycolylglucosamine 6-phosphate (GlcNGc-6-P) in the N-glycolylneuraminic acid (Neu5Gc) degradation pathway. This chain is N-acetylglucosamine-6-phosphate deacetylase (amdhd2), found in Danio rerio (Zebrafish).